The chain runs to 399 residues: Bifunctional enzyme IspD/IspF (399 aa).

The segment at 1–235 is 2-C-methyl-D-erythritol 4-phosphate cytidylyltransferase; that stretch reads METWALILAA…MVEQPKTTVP (235 aa). The segment at 236-399 is 2-C-methyl-D-erythritol 2,4-cyclodiphosphate synthase; it reads IVGYGYDVHK…IVIVTAIRIS (164 aa). Residues Asp-242 and His-244 each coordinate a divalent metal cation. 4-CDP-2-C-methyl-D-erythritol 2-phosphate is bound by residues 242–244 and 275–276; these read DVH and HS. Position 283 (His-283) interacts with a divalent metal cation. Residues 297-299, 302-306, 373-376, and Phe-380 each bind 4-CDP-2-C-methyl-D-erythritol 2-phosphate; these read DIG, FPDSD, and TTEE.

The protein in the N-terminal section; belongs to the IspD/TarI cytidylyltransferase family. IspD subfamily. It in the C-terminal section; belongs to the IspF family. A divalent metal cation serves as cofactor.

It carries out the reaction 2-C-methyl-D-erythritol 4-phosphate + CTP + H(+) = 4-CDP-2-C-methyl-D-erythritol + diphosphate. The enzyme catalyses 4-CDP-2-C-methyl-D-erythritol 2-phosphate = 2-C-methyl-D-erythritol 2,4-cyclic diphosphate + CMP. It functions in the pathway isoprenoid biosynthesis; isopentenyl diphosphate biosynthesis via DXP pathway; isopentenyl diphosphate from 1-deoxy-D-xylulose 5-phosphate: step 2/6. The protein operates within isoprenoid biosynthesis; isopentenyl diphosphate biosynthesis via DXP pathway; isopentenyl diphosphate from 1-deoxy-D-xylulose 5-phosphate: step 4/6. Functionally, bifunctional enzyme that catalyzes the formation of 4-diphosphocytidyl-2-C-methyl-D-erythritol from CTP and 2-C-methyl-D-erythritol 4-phosphate (MEP) (IspD), and catalyzes the conversion of 4-diphosphocytidyl-2-C-methyl-D-erythritol 2-phosphate (CDP-ME2P) to 2-C-methyl-D-erythritol 2,4-cyclodiphosphate (ME-CPP) with a corresponding release of cytidine 5-monophosphate (CMP) (IspF). The sequence is that of Bifunctional enzyme IspD/IspF from Lawsonia intracellularis (strain PHE/MN1-00).